Reading from the N-terminus, the 987-residue chain is KAT8 regulatory NSL complex subunit 1-like protein (987 aa).

Lys134 participates in a covalent cross-link: Glycyl lysine isopeptide (Lys-Gly) (interchain with G-Cter in SUMO2). Ser462 carries the post-translational modification Phosphoserine. The segment at 708-738 is disordered; the sequence is RKKRHLSETALGERTKLEESDFQHTESGSHS. Basic and acidic residues predominate over residues 718 to 731; it reads LGERTKLEESDFQH. A PEHE domain is found at 794–915; it reads EILTPSWRMV…QSQETKSLWW (122 aa). Lys859 bears the N6-acetyllysine mark. Positions 949–972 are disordered; it reads GEIFGTSVPENGHHPKKQSDGMEE. The segment covering 959 to 972 has biased composition (basic and acidic residues); it reads NGHHPKKQSDGMEE.

In terms of processing, acetylated on lysine residues by KAT8 upon ionizing radiation-induced DNA damage; deacetylated by HDAC3.

In Homo sapiens (Human), this protein is KAT8 regulatory NSL complex subunit 1-like protein (KANSL1L).